Reading from the N-terminus, the 305-residue chain is ADP,ATP carrier protein (305 aa).

Solcar repeat units lie at residues 8-101 (SNFA…IKAM), 112-204 (KWFA…LKPL), and 212-298 (NSFL…LQVI). A run of 5 helical transmembrane segments spans residues 10–37 (FAIDFLMGGVSAAVSKTAAAPIERVKLL), 78–102 (TANVIRYFPTQALNFAFKDKIKAMF), 110–130 (YAKWFAGNLASGGLAGGLSLL), 180–201 (FLPSVVGIVVYRGLYFGLYDSL), and 215–235 (LASFLLGWAVTTGASTASYPL). Residues Arg-83 and Lys-95 each coordinate ADP. ADP is bound at residue Arg-239. An important for transport activity region spans residues 239–244 (RRRMMM). Positions 239-244 (RRRMMM) match the Nucleotide carrier signature motif motif. Residues 275 to 295 (CGANILRGVAGAGVISMYDQL) traverse the membrane as a helical segment.

Belongs to the mitochondrial carrier (TC 2.A.29) family. In terms of assembly, monomer.

The protein resides in the mitochondrion inner membrane. It catalyses the reaction ADP(in) + ATP(out) = ADP(out) + ATP(in). With respect to regulation, the matrix-open state (m-state) is inhibited by the membrane-permeable bongkrekic acid (BKA). The cytoplasmic-open state (c-state) is inhibited by the membrane-impermeable toxic inhibitor carboxyatractyloside (CATR). Its function is as follows. ADP:ATP antiporter that mediates import of ADP into the mitochondrial matrix for ATP synthesis, and export of ATP out to fuel the cell. Cycles between the cytoplasmic-open state (c-state) and the matrix-open state (m-state): operates by the alternating access mechanism with a single substrate-binding site intermittently exposed to either the cytosolic (c-state) or matrix (m-state) side of the inner mitochondrial membrane. This chain is ADP,ATP carrier protein (AAC), found in Kluyveromyces lactis (strain ATCC 8585 / CBS 2359 / DSM 70799 / NBRC 1267 / NRRL Y-1140 / WM37) (Yeast).